The following is a 29-amino-acid chain: Cysteine-rich venom protein 25-A (29 aa).

The protein belongs to the CRISP family. In terms of processing, contains 8 disulfide bonds. In terms of tissue distribution, expressed by the venom gland.

The protein resides in the secreted. The protein is Cysteine-rich venom protein 25-A of Naja haje haje (Egyptian cobra).